A 284-amino-acid polypeptide reads, in one-letter code: Signal peptidase I (284 aa).

The chain crosses the membrane as a helical span at residues 4–22 (NFPLLLVIAVAVCGLLALL). The Cytoplasmic segment spans residues 23–58 (DLVFFAPRRRSAIASYQGSVSQPDAVVIEKLNKEPL). The helical transmembrane segment at 59–77 (LVEYGKSFFPVLFIVLVLR) threads the bilayer. At 78–284 (SFLVEPFQIP…PNFSRVGLIK (207 aa)) the chain is on the periplasmic side. Active-site residues include serine 90 and lysine 145.

The protein belongs to the peptidase S26 family.

Its subcellular location is the cell inner membrane. It catalyses the reaction Cleavage of hydrophobic, N-terminal signal or leader sequences from secreted and periplasmic proteins.. This chain is Signal peptidase I (lepB), found in Pseudomonas fluorescens.